Reading from the N-terminus, the 663-residue chain is UvrABC system protein B (663 aa).

Basic and acidic residues predominate over residues 1-10 (MIDKRDDKPF). The tract at residues 1-23 (MIDKRDDKPFKLKSKYKPSGDQP) is disordered. The 241-residue stretch at 31 to 271 (DNIEGGEKAQ…EQSIAKIQAE (241 aa)) folds into the Helicase ATP-binding domain. An ATP-binding site is contributed by 44 to 51 (GATGTGKT). The Beta-hairpin signature appears at 97 to 120 (YYDYYQPEAYVPSSDTYIEKDSSV). The Helicase C-terminal domain maps to 435-601 (QIDDLLGEIN…TIKKDIRGLI (167 aa)). The 36-residue stretch at 627 to 662 (KEAINALQKQMQEAAELLDFELAAQMRDLILELKLM) folds into the UVR domain.

This sequence belongs to the UvrB family. As to quaternary structure, forms a heterotetramer with UvrA during the search for lesions. Interacts with UvrC in an incision complex.

It is found in the cytoplasm. The UvrABC repair system catalyzes the recognition and processing of DNA lesions. A damage recognition complex composed of 2 UvrA and 2 UvrB subunits scans DNA for abnormalities. Upon binding of the UvrA(2)B(2) complex to a putative damaged site, the DNA wraps around one UvrB monomer. DNA wrap is dependent on ATP binding by UvrB and probably causes local melting of the DNA helix, facilitating insertion of UvrB beta-hairpin between the DNA strands. Then UvrB probes one DNA strand for the presence of a lesion. If a lesion is found the UvrA subunits dissociate and the UvrB-DNA preincision complex is formed. This complex is subsequently bound by UvrC and the second UvrB is released. If no lesion is found, the DNA wraps around the other UvrB subunit that will check the other stand for damage. The protein is UvrABC system protein B of Streptococcus pyogenes serotype M5 (strain Manfredo).